The following is a 340-amino-acid chain: Ketol-acid reductoisomerase (NADP(+)) (340 aa).

Residues 3–182 (VQMEYEKDVK…GAARVGLLET (180 aa)) form the KARI N-terminal Rossmann domain. Residues 26-29 (YGSQ), R49, S53, and 83-86 (DEIQ) each bind NADP(+). Residue H108 is part of the active site. Residue G134 participates in NADP(+) binding. Residues 183-328 (TYKEETEEDL…AELRKAMPFV (146 aa)) enclose the KARI C-terminal knotted domain. 4 residues coordinate Mg(2+): D191, E195, E227, and E231. S252 is a substrate binding site.

Belongs to the ketol-acid reductoisomerase family. Mg(2+) is required as a cofactor.

The enzyme catalyses (2R)-2,3-dihydroxy-3-methylbutanoate + NADP(+) = (2S)-2-acetolactate + NADPH + H(+). It catalyses the reaction (2R,3R)-2,3-dihydroxy-3-methylpentanoate + NADP(+) = (S)-2-ethyl-2-hydroxy-3-oxobutanoate + NADPH + H(+). The protein operates within amino-acid biosynthesis; L-isoleucine biosynthesis; L-isoleucine from 2-oxobutanoate: step 2/4. It functions in the pathway amino-acid biosynthesis; L-valine biosynthesis; L-valine from pyruvate: step 2/4. In terms of biological role, involved in the biosynthesis of branched-chain amino acids (BCAA). Catalyzes an alkyl-migration followed by a ketol-acid reduction of (S)-2-acetolactate (S2AL) to yield (R)-2,3-dihydroxy-isovalerate. In the isomerase reaction, S2AL is rearranged via a Mg-dependent methyl migration to produce 3-hydroxy-3-methyl-2-ketobutyrate (HMKB). In the reductase reaction, this 2-ketoacid undergoes a metal-dependent reduction by NADPH to yield (R)-2,3-dihydroxy-isovalerate. The protein is Ketol-acid reductoisomerase (NADP(+)) of Streptococcus pneumoniae (strain CGSP14).